The following is a 430-amino-acid chain: Adenylosuccinate synthetase (430 aa).

Residues 12-18 and 40-42 contribute to the GTP site; these read GDEGKGK and GHT. The active-site Proton acceptor is the D13. Mg(2+) contacts are provided by D13 and G40. Residues 13–16, 38–41, T128, R142, Q223, T238, and R302 each bind IMP; these read DEGK and NAGH. H41 serves as the catalytic Proton donor. Position 298 to 304 (298 to 304) interacts with substrate; the sequence is TTTGRPR. Residues R304, 330–332, and 413–415 contribute to the GTP site; these read SID and SVG.

The protein belongs to the adenylosuccinate synthetase family. As to quaternary structure, homodimer. It depends on Mg(2+) as a cofactor.

The protein resides in the cytoplasm. It carries out the reaction IMP + L-aspartate + GTP = N(6)-(1,2-dicarboxyethyl)-AMP + GDP + phosphate + 2 H(+). It functions in the pathway purine metabolism; AMP biosynthesis via de novo pathway; AMP from IMP: step 1/2. Its function is as follows. Plays an important role in the de novo pathway of purine nucleotide biosynthesis. Catalyzes the first committed step in the biosynthesis of AMP from IMP. This is Adenylosuccinate synthetase from Lactococcus lactis subsp. lactis (strain IL1403) (Streptococcus lactis).